Here is an 841-residue protein sequence, read N- to C-terminus: DNA ligase (841 aa).

NAD(+) contacts are provided by residues 33-37 (DAQYD), 82-83 (SL), and Glu114. Residue Lys116 is the N6-AMP-lysine intermediate of the active site. Arg137, Glu174, Lys300, and Lys324 together coordinate NAD(+). Zn(2+) is bound by residues Cys418, Cys421, Cys436, and Cys442. One can recognise a BRCT domain in the interval 758 to 841 (EKTGPLDGQT…AFLGEHGQQR (84 aa)).

Belongs to the NAD-dependent DNA ligase family. LigA subfamily. The cofactor is Mg(2+). Requires Mn(2+) as cofactor.

The catalysed reaction is NAD(+) + (deoxyribonucleotide)n-3'-hydroxyl + 5'-phospho-(deoxyribonucleotide)m = (deoxyribonucleotide)n+m + AMP + beta-nicotinamide D-nucleotide.. In terms of biological role, DNA ligase that catalyzes the formation of phosphodiester linkages between 5'-phosphoryl and 3'-hydroxyl groups in double-stranded DNA using NAD as a coenzyme and as the energy source for the reaction. It is essential for DNA replication and repair of damaged DNA. In Xanthomonas oryzae pv. oryzae (strain MAFF 311018), this protein is DNA ligase.